A 471-amino-acid polypeptide reads, in one-letter code: MKIKTRFAPSPTGYLHVGGARTALYSWLFTRHFGGEFVLRIEDTDLERSTQEAIDAIMDGMNWLNLDWDEGPYFQTKRFDRYNAVIDQMLENGTAYRCYCSKERLDELREAQMTNGEKPRYDGRCRDSQCTHGADEPSVVRFRNPQAGSVIFNDKIRGPIEFSNQELDDLIIRRTDGSPTYNFCVVVDDWDMEITHVIRGEDHINNTPRQINILKALGAPVPEYAHVSMILGDDGKKLSKRHGAVGVMQYRDDGYLPEALLNYLVRLGWSHGDQEIFSVAEMTELFTLDAVSKSASAFNTEKLQWLNHHYINSLPPEQVAVHLSWQVEQLGIDTRNGPELVEIVKLLGERCKTLKEMAESCRYFYEEFDEFDADAAKKHLRPVARQPLEAVKAKLAAITEWTTENVHNAIQGTADELGVGMGKVGMPLRVAVTGAGQSPGMDVTVHAIGQARSLSRIDKALAFISEREAQQ.

A 'HIGH' region motif is present at residues 9 to 19 (PSPTGYLHVGG). 4 residues coordinate Zn(2+): Cys98, Cys100, Cys125, and Asp127. Residues 237 to 241 (KLSKR) carry the 'KMSKS' region motif. Lys240 contributes to the ATP binding site.

This sequence belongs to the class-I aminoacyl-tRNA synthetase family. Glutamate--tRNA ligase type 1 subfamily. In terms of assembly, monomer. Zn(2+) serves as cofactor.

The protein resides in the cytoplasm. The enzyme catalyses tRNA(Glu) + L-glutamate + ATP = L-glutamyl-tRNA(Glu) + AMP + diphosphate. Functionally, catalyzes the attachment of glutamate to tRNA(Glu) in a two-step reaction: glutamate is first activated by ATP to form Glu-AMP and then transferred to the acceptor end of tRNA(Glu). In Yersinia enterocolitica serotype O:8 / biotype 1B (strain NCTC 13174 / 8081), this protein is Glutamate--tRNA ligase.